The following is a 585-amino-acid chain: Formate--tetrahydrofolate ligase (585 aa).

T65–T72 lines the ATP pocket.

The protein belongs to the formate--tetrahydrofolate ligase family.

The enzyme catalyses (6S)-5,6,7,8-tetrahydrofolate + formate + ATP = (6R)-10-formyltetrahydrofolate + ADP + phosphate. The protein operates within one-carbon metabolism; tetrahydrofolate interconversion. The sequence is that of Formate--tetrahydrofolate ligase from Shewanella baltica (strain OS195).